The following is a 367-amino-acid chain: Anhydro-N-acetylmuramic acid kinase (367 aa).

11 to 18 (GTSLDGVD) lines the ATP pocket.

It belongs to the anhydro-N-acetylmuramic acid kinase family.

The catalysed reaction is 1,6-anhydro-N-acetyl-beta-muramate + ATP + H2O = N-acetyl-D-muramate 6-phosphate + ADP + H(+). The protein operates within amino-sugar metabolism; 1,6-anhydro-N-acetylmuramate degradation. Its pathway is cell wall biogenesis; peptidoglycan recycling. Catalyzes the specific phosphorylation of 1,6-anhydro-N-acetylmuramic acid (anhMurNAc) with the simultaneous cleavage of the 1,6-anhydro ring, generating MurNAc-6-P. Is required for the utilization of anhMurNAc either imported from the medium or derived from its own cell wall murein, and thus plays a role in cell wall recycling. The sequence is that of Anhydro-N-acetylmuramic acid kinase from Chromobacterium violaceum (strain ATCC 12472 / DSM 30191 / JCM 1249 / CCUG 213 / NBRC 12614 / NCIMB 9131 / NCTC 9757 / MK).